Reading from the N-terminus, the 87-residue chain is Large ribosomal subunit protein bL27 (87 aa).

The tract at residues Met1–Gly22 is disordered.

This sequence belongs to the bacterial ribosomal protein bL27 family.

The chain is Large ribosomal subunit protein bL27 from Nitratidesulfovibrio vulgaris (strain DP4) (Desulfovibrio vulgaris).